A 361-amino-acid chain; its full sequence is Flagellar P-ring protein (361 aa).

The N-terminal stretch at methionine 1–alanine 18 is a signal peptide.

The protein belongs to the FlgI family. In terms of assembly, the basal body constitutes a major portion of the flagellar organelle and consists of four rings (L,P,S, and M) mounted on a central rod.

It localises to the periplasm. Its subcellular location is the bacterial flagellum basal body. Functionally, assembles around the rod to form the L-ring and probably protects the motor/basal body from shearing forces during rotation. This is Flagellar P-ring protein from Vibrio cholerae serotype O1 (strain ATCC 39541 / Classical Ogawa 395 / O395).